Reading from the N-terminus, the 235-residue chain is Aspartate/glutamate leucyltransferase (235 aa).

Belongs to the R-transferase family. Bpt subfamily.

It is found in the cytoplasm. The catalysed reaction is N-terminal L-glutamyl-[protein] + L-leucyl-tRNA(Leu) = N-terminal L-leucyl-L-glutamyl-[protein] + tRNA(Leu) + H(+). It carries out the reaction N-terminal L-aspartyl-[protein] + L-leucyl-tRNA(Leu) = N-terminal L-leucyl-L-aspartyl-[protein] + tRNA(Leu) + H(+). In terms of biological role, functions in the N-end rule pathway of protein degradation where it conjugates Leu from its aminoacyl-tRNA to the N-termini of proteins containing an N-terminal aspartate or glutamate. The protein is Aspartate/glutamate leucyltransferase of Pseudomonas fluorescens (strain Pf0-1).